The sequence spans 225 residues: Ribosome maturation factor RimP (225 aa).

Belongs to the RimP family.

It localises to the cytoplasm. Its function is as follows. Required for maturation of 30S ribosomal subunits. The sequence is that of Ribosome maturation factor RimP from Rhodospirillum rubrum (strain ATCC 11170 / ATH 1.1.1 / DSM 467 / LMG 4362 / NCIMB 8255 / S1).